A 288-amino-acid chain; its full sequence is Eukaryotic translation initiation factor 3 subunit G (288 aa).

Residues 1-35 form a disordered region; that stretch reads MSRVANNRDWADDEDLEDSNELPQSTTTTNKDGTQ. Residues 11 to 20 show a composition bias toward acidic residues; it reads ADDEDLEDSN. Residues 21-35 show a composition bias toward polar residues; that stretch reads ELPQSTTTTNKDGTQ. An RRM domain is found at 208-286; that stretch reads ATLRVTNVSE…LILRVEFAKK (79 aa).

Belongs to the eIF-3 subunit G family. As to quaternary structure, component of the eukaryotic translation initiation factor 3 (eIF-3) complex.

It is found in the cytoplasm. Its function is as follows. RNA-binding component of the eukaryotic translation initiation factor 3 (eIF-3) complex, which is involved in protein synthesis of a specialized repertoire of mRNAs and, together with other initiation factors, stimulates binding of mRNA and methionyl-tRNAi to the 40S ribosome. The eIF-3 complex specifically targets and initiates translation of a subset of mRNAs involved in cell proliferation. This subunit can bind 18S rRNA. This Botryotinia fuckeliana (strain B05.10) (Noble rot fungus) protein is Eukaryotic translation initiation factor 3 subunit G (tif35).